A 121-amino-acid polypeptide reads, in one-letter code: Small ribosomal subunit protein uS11 (121 aa).

It belongs to the universal ribosomal protein uS11 family. Part of the 30S ribosomal subunit. Interacts with proteins S7 and S18. Binds to IF-3.

Functionally, located on the platform of the 30S subunit, it bridges several disparate RNA helices of the 16S rRNA. Forms part of the Shine-Dalgarno cleft in the 70S ribosome. This Ureaplasma parvum serovar 3 (strain ATCC 27815 / 27 / NCTC 11736) protein is Small ribosomal subunit protein uS11.